The sequence spans 185 residues: Elongation factor P (185 aa).

This sequence belongs to the elongation factor P family.

Its subcellular location is the cytoplasm. Its pathway is protein biosynthesis; polypeptide chain elongation. Its function is as follows. Involved in peptide bond synthesis. Stimulates efficient translation and peptide-bond synthesis on native or reconstituted 70S ribosomes in vitro. Probably functions indirectly by altering the affinity of the ribosome for aminoacyl-tRNA, thus increasing their reactivity as acceptors for peptidyl transferase. This chain is Elongation factor P, found in Streptococcus pyogenes serotype M28 (strain MGAS6180).